The primary structure comprises 90 residues: Small ribosomal subunit protein bS16 (90 aa).

Belongs to the bacterial ribosomal protein bS16 family.

The chain is Small ribosomal subunit protein bS16 from Bacillus cytotoxicus (strain DSM 22905 / CIP 110041 / 391-98 / NVH 391-98).